A 456-amino-acid chain; its full sequence is Bifunctional protein GlmU (456 aa).

The tract at residues 1–229 is pyrophosphorylase; the sequence is MLNNAMSVVI…LSEVEGVNNR (229 aa). Residues 11-14, K25, Q76, 81-82, 103-105, G140, E154, N169, and N227 each bind UDP-N-acetyl-alpha-D-glucosamine; these read LAAG, GT, and YGD. D105 is a Mg(2+) binding site. Mg(2+) is bound at residue N227. Residues 230-250 form a linker region; the sequence is LQLSRLERVYQSEQAEKLLLA. The segment at 251–456 is N-acetyltransferase; the sequence is GVMLRDPARF…EGWRRPVKKK (206 aa). 2 residues coordinate UDP-N-acetyl-alpha-D-glucosamine: R333 and K351. H363 serves as the catalytic Proton acceptor. Y366 and N377 together coordinate UDP-N-acetyl-alpha-D-glucosamine. Residues A380, 386–387, S405, A423, and R440 each bind acetyl-CoA; that span reads NY.

This sequence in the N-terminal section; belongs to the N-acetylglucosamine-1-phosphate uridyltransferase family. In the C-terminal section; belongs to the transferase hexapeptide repeat family. In terms of assembly, homotrimer. Mg(2+) serves as cofactor.

The protein resides in the cytoplasm. The enzyme catalyses alpha-D-glucosamine 1-phosphate + acetyl-CoA = N-acetyl-alpha-D-glucosamine 1-phosphate + CoA + H(+). It carries out the reaction N-acetyl-alpha-D-glucosamine 1-phosphate + UTP + H(+) = UDP-N-acetyl-alpha-D-glucosamine + diphosphate. It participates in nucleotide-sugar biosynthesis; UDP-N-acetyl-alpha-D-glucosamine biosynthesis; N-acetyl-alpha-D-glucosamine 1-phosphate from alpha-D-glucosamine 6-phosphate (route II): step 2/2. It functions in the pathway nucleotide-sugar biosynthesis; UDP-N-acetyl-alpha-D-glucosamine biosynthesis; UDP-N-acetyl-alpha-D-glucosamine from N-acetyl-alpha-D-glucosamine 1-phosphate: step 1/1. Its pathway is bacterial outer membrane biogenesis; LPS lipid A biosynthesis. Catalyzes the last two sequential reactions in the de novo biosynthetic pathway for UDP-N-acetylglucosamine (UDP-GlcNAc). The C-terminal domain catalyzes the transfer of acetyl group from acetyl coenzyme A to glucosamine-1-phosphate (GlcN-1-P) to produce N-acetylglucosamine-1-phosphate (GlcNAc-1-P), which is converted into UDP-GlcNAc by the transfer of uridine 5-monophosphate (from uridine 5-triphosphate), a reaction catalyzed by the N-terminal domain. The polypeptide is Bifunctional protein GlmU (Escherichia coli O157:H7 (strain EC4115 / EHEC)).